We begin with the raw amino-acid sequence, 76 residues long: Esculentin-2MT3 (76 aa).

An N-terminal signal peptide occupies residues 1–22; that stretch reads MFTLKKSMLLLFFLGTISLSLC. A propeptide spans 23–37 (removed in mature form); that stretch reads EEERNADEDDGEKEV. A disulfide bridge connects residues C70 and C76.

Belongs to the frog skin active peptide (FSAP) family. Esculentin subfamily. As to expression, expressed by the skin glands.

It localises to the secreted. Its function is as follows. Antimicrobial peptide. The polypeptide is Esculentin-2MT3 (Amolops mantzorum (Sichuan torrent frog)).